The sequence spans 292 residues: AKT-interacting protein homolog B (292 aa).

The tract at residues 1–44 is disordered; sequence MNPFWNMPSASVRKRSDNDEKIATADQKISPARSSSAKKQLPSI. Residues 14-23 show a composition bias toward basic and acidic residues; it reads KRSDNDEKIA. Positions 75-223 constitute a UBC core domain; that stretch reads YLEYSLLAEF…VVDSVKLCNS (149 aa).

It belongs to the ubiquitin-conjugating enzyme family. FTS subfamily.

The protein localises to the cytoplasm. Its subcellular location is the cell membrane. In terms of biological role, may function to promote vesicle trafficking and/or fusion. May also regulate apoptosis. The polypeptide is AKT-interacting protein homolog B (aktip-b) (Xenopus laevis (African clawed frog)).